The chain runs to 341 residues: tRNA uridine(34) hydroxylase (341 aa).

In terms of domain architecture, Rhodanese spans 139–233; it reads SDPEVVLVDT…YLEEVPSTET (95 aa). C193 functions as the Cysteine persulfide intermediate in the catalytic mechanism. Basic and acidic residues-rich tracts occupy residues 306–316 and 324–341; these read SLAEERGESHI and IEERRQEKNDKKAKQANK. A disordered region spans residues 306–341; that stretch reads SLAEERGESHIGGDIQNIIEERRQEKNDKKAKQANK.

It belongs to the TrhO family.

The catalysed reaction is uridine(34) in tRNA + AH2 + O2 = 5-hydroxyuridine(34) in tRNA + A + H2O. Its function is as follows. Catalyzes oxygen-dependent 5-hydroxyuridine (ho5U) modification at position 34 in tRNAs. This chain is tRNA uridine(34) hydroxylase, found in Colwellia psychrerythraea (strain 34H / ATCC BAA-681) (Vibrio psychroerythus).